A 342-amino-acid chain; its full sequence is Ferredoxin--NADP reductase (342 aa).

The FAD site is built by cysteine 17, aspartate 36, glutamine 44, tyrosine 49, valine 89, phenylalanine 124, aspartate 289, and threonine 330.

Belongs to the ferredoxin--NADP reductase type 2 family. In terms of assembly, homodimer. FAD is required as a cofactor.

It catalyses the reaction 2 reduced [2Fe-2S]-[ferredoxin] + NADP(+) + H(+) = 2 oxidized [2Fe-2S]-[ferredoxin] + NADPH. In Bradyrhizobium diazoefficiens (strain JCM 10833 / BCRC 13528 / IAM 13628 / NBRC 14792 / USDA 110), this protein is Ferredoxin--NADP reductase.